The sequence spans 107 residues: Large ribosomal subunit protein bL21 (107 aa).

This sequence belongs to the bacterial ribosomal protein bL21 family. In terms of assembly, part of the 50S ribosomal subunit. Contacts protein L20.

Its function is as follows. This protein binds to 23S rRNA in the presence of protein L20. This chain is Large ribosomal subunit protein bL21, found in Chlamydia trachomatis serovar L2 (strain ATCC VR-902B / DSM 19102 / 434/Bu).